Here is a 113-residue protein sequence, read N- to C-terminus: Transcriptional regulator RamA (113 aa).

In terms of domain architecture, HTH araC/xylS-type spans 9–107 (DTIVEWIDDN…NQPPGAYRKE (99 aa)). DNA-binding regions (H-T-H motif) lie at residues 26–47 (DDIA…LQYK) and 74–97 (VYDI…TRTF).

As to quaternary structure, monomer. Interacts with the C-terminus of RNAP subunit RpoA when part of class I or class II promoter complexes. Also interacts with sigma-70/RpoD in class II promoter complexes.

In terms of biological role, transcriptional regulator. Binds to regulatory regions of target genes, including its own gene, efflux pump operon acrAB, antisense RNA gene micF, and various genes involved in lipid A biosynthesis, including lpxO and lpxL-2. Regulates expression of many genes, perhaps including its own; activates various lipid A biosynthetic genes, and as a result of activating acrAB, confers multidrug resistance. Plays a role in virulence and survival in host cells. The protein is Transcriptional regulator RamA of Klebsiella pneumoniae subsp. pneumoniae (strain HS11286).